The following is a 331-amino-acid chain: UPF0194 membrane protein YbhG (331 aa).

The N-terminal stretch at methionine 1–alanine 19 is a signal peptide. Positions glutamate 107–alanine 208 form a coiled coil.

Belongs to the UPF0194 family.

The protein localises to the periplasm. The chain is UPF0194 membrane protein YbhG from Salmonella agona (strain SL483).